A 266-amino-acid chain; its full sequence is Vitamin B12-binding protein (266 aa).

The first 22 residues, 1 to 22 (MAKQMFRALVALLLTLPVWLYA), serve as a signal peptide directing secretion. Positions 25-266 (RVITLSPANT…QLCNALSQVN (242 aa)) constitute a Fe/B12 periplasmic-binding domain. Residues Y50 and 242–246 (DWFER) each bind cyanocob(III)alamin. A disulfide bridge links C183 with C259.

The protein belongs to the BtuF family. In terms of assembly, the complex is composed of two ATP-binding proteins (BtuD), two transmembrane proteins (BtuC) and a solute-binding protein (BtuF).

It localises to the periplasm. Its function is as follows. Part of the ABC transporter complex BtuCDF involved in vitamin B12 import. Binds vitamin B12 and delivers it to the periplasmic surface of BtuC. In Salmonella paratyphi A (strain ATCC 9150 / SARB42), this protein is Vitamin B12-binding protein.